The primary structure comprises 742 residues: Glycine--tRNA ligase (742 aa).

The WHEP-TRS domain occupies 73–129 (KLAPLRAAVKEYGDLIRDLKAKGAPKIDIDKAVVELKARKRLLEDTEIALAPKEASF). Glu309 lines the glycine pocket. ATP contacts are provided by residues 341–343 (RNE) and 352–353 (RV). Glu360 serves as a coordination point for glycine. 467-468 (EC) provides a ligand contact to ATP. 586 to 588 (EPS) lines the glycine pocket. Position 593 (Arg593) interacts with ATP.

This sequence belongs to the class-II aminoacyl-tRNA synthetase family. In terms of assembly, homodimer.

It localises to the cytoplasm. The protein localises to the cell projection. Its subcellular location is the axon. It is found in the secreted. The protein resides in the extracellular exosome. It carries out the reaction tRNA(Gly) + glycine + ATP = glycyl-tRNA(Gly) + AMP + diphosphate. The enzyme catalyses 2 ATP + H(+) = P(1),P(4)-bis(5'-adenosyl) tetraphosphate + diphosphate. Its function is as follows. Catalyzes the ATP-dependent ligation of glycine to the 3'-end of its cognate tRNA, via the formation of an aminoacyl-adenylate intermediate (Gly-AMP). Also produces diadenosine tetraphosphate (Ap4A), a universal pleiotropic signaling molecule needed for cell regulation pathways, by direct condensation of 2 ATPs. Thereby, may play a special role in Ap4A homeostasis. The polypeptide is Glycine--tRNA ligase (Caenorhabditis elegans).